The following is a 293-amino-acid chain: 4-hydroxy-tetrahydrodipicolinate synthase (293 aa).

Thr-45 contacts pyruvate. Residue Tyr-133 is the Proton donor/acceptor of the active site. Lys-161 (schiff-base intermediate with substrate) is an active-site residue. Position 203 (Val-203) interacts with pyruvate.

Belongs to the DapA family. As to quaternary structure, homotetramer; dimer of dimers.

Its subcellular location is the cytoplasm. It catalyses the reaction L-aspartate 4-semialdehyde + pyruvate = (2S,4S)-4-hydroxy-2,3,4,5-tetrahydrodipicolinate + H2O + H(+). The protein operates within amino-acid biosynthesis; L-lysine biosynthesis via DAP pathway; (S)-tetrahydrodipicolinate from L-aspartate: step 3/4. Functionally, catalyzes the condensation of (S)-aspartate-beta-semialdehyde [(S)-ASA] and pyruvate to 4-hydroxy-tetrahydrodipicolinate (HTPA). This Exiguobacterium sp. (strain ATCC BAA-1283 / AT1b) protein is 4-hydroxy-tetrahydrodipicolinate synthase.